A 134-amino-acid polypeptide reads, in one-letter code: Parvalbumin-like EF-hand-containing protein (134 aa).

EF-hand domains lie at 55-90 and 96-131; these read QLDD…IPSS and LTDE…EKIP. The Ca(2+) site is built by aspartate 68, aspartate 70, serine 72, phenylalanine 74, glutamate 76, glutamate 79, aspartate 109, aspartate 113, and glutamate 120.

This sequence belongs to the parvalbumin family.

The protein is Parvalbumin-like EF-hand-containing protein of Homo sapiens (Human).